The chain runs to 627 residues: Zinc finger MYM-type protein 5 (627 aa).

Residues M1 to R23 form a disordered region. The segment covering G12–R23 has biased composition (polar residues). K59 participates in a covalent cross-link: Glycyl lysine isopeptide (Lys-Gly) (interchain with G-Cter in SUMO2). Positions D91–N123 are disordered. Glycyl lysine isopeptide (Lys-Gly) (interchain with G-Cter in SUMO2) cross-links involve residues K137 and K195. The MYM-type 1 zinc finger occupies H234–T268. The MYM-type 2; degenerate zinc finger occupies Q280–I319. 2 MYM-type zinc fingers span residues H326–Y354 and K370–N396. Residues E405–E429 form a disordered region. Residues K408, K427, and K517 each participate in a glycyl lysine isopeptide (Lys-Gly) (interchain with G-Cter in SUMO2) cross-link.

As to quaternary structure, interacts (via N-terminal 120 amino acid region) with ETV5 (via C-terminal).

Its subcellular location is the nucleus. Functions as a transcriptional regulator. This is Zinc finger MYM-type protein 5 (Zmym5) from Mus musculus (Mouse).